The sequence spans 326 residues: DNA-directed RNA polymerase subunit alpha (326 aa).

An alpha N-terminal domain (alpha-NTD) region spans residues 1–231; that stretch reads MQSNSLLKPR…DQLSVFADLE (231 aa). The segment at 245–326 is alpha C-terminal domain (alpha-CTD); sequence IDPVLLRPVD…WPPAGLEKLG (82 aa).

Belongs to the RNA polymerase alpha chain family. As to quaternary structure, homodimer. The RNAP catalytic core consists of 2 alpha, 1 beta, 1 beta' and 1 omega subunit. When a sigma factor is associated with the core the holoenzyme is formed, which can initiate transcription.

The enzyme catalyses RNA(n) + a ribonucleoside 5'-triphosphate = RNA(n+1) + diphosphate. DNA-dependent RNA polymerase catalyzes the transcription of DNA into RNA using the four ribonucleoside triphosphates as substrates. In Aromatoleum aromaticum (strain DSM 19018 / LMG 30748 / EbN1) (Azoarcus sp. (strain EbN1)), this protein is DNA-directed RNA polymerase subunit alpha.